A 1585-amino-acid polypeptide reads, in one-letter code: Maestro heat-like repeat-containing protein family member 2B (1585 aa).

HEAT repeat units lie at residues 28-65, 228-263, 272-309, 310-346, 405-445, 531-569, 572-611, 662-699, 777-819, 964-1001, 1021-1059, 1112-1151, 1157-1195, 1258-1295, and 1363-1402; these read VNKE…DMRD, GYAL…AAVL, LRRS…LAHS, NPGE…ADEP, TLNR…LVIG, IGLL…STVL, TMLL…NSTE, ENHL…LTKT, SYKE…LKPQ, HLEV…KFIP, PTCT…HMPV, ASSG…VISM, GLYP…QGEQ, GVIL…EPIL, and CESL…EQDD.

In terms of assembly, found in a complex at least composed of MROH2B, PRKACA isoform 2 and TCP11. Interacts with PRKACA. Interacts with TCP11. Post-translationally, constitutively phosphorylated on serine and threonine residues in acrosomal region of the sperm head, midpiece and flagellar regions of noncapacitated spermatozoa. Phosphorylation on tyrosine residues increases upon sperm capacitation within the acrosomal and tail regions in a protein kinase A (PKA)-dependent signaling pathway.

Its subcellular location is the cytoplasm. The protein resides in the cytoplasmic vesicle. It is found in the secretory vesicle. The protein localises to the acrosome. It localises to the cell projection. Its subcellular location is the cilium. The protein resides in the flagellum. Functionally, may play a role in the process of sperm capacitation. This is Maestro heat-like repeat-containing protein family member 2B from Homo sapiens (Human).